We begin with the raw amino-acid sequence, 61 residues long: Small ribosomal subunit protein uS14 (61 aa).

Zn(2+)-binding residues include Cys24, Cys27, Cys40, and Cys43.

The protein belongs to the universal ribosomal protein uS14 family. Zinc-binding uS14 subfamily. In terms of assembly, part of the 30S ribosomal subunit. Contacts proteins S3 and S10. Requires Zn(2+) as cofactor.

Binds 16S rRNA, required for the assembly of 30S particles and may also be responsible for determining the conformation of the 16S rRNA at the A site. The sequence is that of Small ribosomal subunit protein uS14 from Clostridium acetobutylicum (strain ATCC 824 / DSM 792 / JCM 1419 / IAM 19013 / LMG 5710 / NBRC 13948 / NRRL B-527 / VKM B-1787 / 2291 / W).